The sequence spans 536 residues: Xylulose kinase (536 aa).

Substrate is bound by residues H99, R170, D280, and N281. ATP contacts are provided by residues W355, 441–442, and N445; that span reads GA.

It belongs to the FGGY kinase family. In terms of assembly, monomer.

It catalyses the reaction D-xylulose + ATP = D-xylulose 5-phosphate + ADP + H(+). Phosphorylates D-xylulose to produce D-xylulose 5-phosphate, a molecule that may play an important role in the regulation of glucose metabolism and lipogenesis. The polypeptide is Xylulose kinase (XYLB) (Homo sapiens (Human)).